Consider the following 627-residue polypeptide: Plasmepsin IX (627 aa).

The Cytoplasmic portion of the chain corresponds to 1-13 (MFFINFKKIKKKQ). Residues 14 to 34 (FPIYLTQHRIITVFLIFIYFI) traverse the membrane as a helical; Signal-anchor for type II membrane protein segment. Residues 35-627 (NLKDCFHINN…SSLHNKINNL (593 aa)) lie on the Lumenal side of the membrane. The Peptidase A1 domain occupies 228 to 605 (YVGYIQIGTP…NNNSSYVGIA (378 aa)). Active-site residues include Asp-246 and Asp-495.

This sequence belongs to the peptidase A1 family. Post-translationally, autocleaved into a p55 mature form.

It is found in the membrane. The protein resides in the cytoplasmic vesicle. Its subcellular location is the secretory vesicle. It localises to the rhoptry. With respect to regulation, inhibited by small molecule 49c. Inhibited by small molecule WM382. Functionally, during the asexual blood stage, initiates the proteolytic maturation of several rhoptry proteins and thus, is required for merozoite invasion of host erythrocytes and probably the subsequent development of the ring-stage. Cleaves rhoptry associated protein 1 RAP1 and apical sushi protein ASP during schizont maturation. Also cleaves rhoptry protein RON3. The polypeptide is Plasmepsin IX (Plasmodium falciparum (isolate 3D7)).